A 154-amino-acid polypeptide reads, in one-letter code: Peptide methionine sulfoxide reductase MsrB (154 aa).

Residues 28-150 (DQQWREQLSE…NSVSLIFNKI (123 aa)) enclose the MsrB domain. Cysteine 67, cysteine 70, cysteine 116, and cysteine 119 together coordinate Zn(2+). The active-site Nucleophile is cysteine 139.

This sequence belongs to the MsrB Met sulfoxide reductase family. Zn(2+) is required as a cofactor.

The enzyme catalyses L-methionyl-[protein] + [thioredoxin]-disulfide + H2O = L-methionyl-(R)-S-oxide-[protein] + [thioredoxin]-dithiol. The polypeptide is Peptide methionine sulfoxide reductase MsrB (Vibrio vulnificus (strain CMCP6)).